The primary structure comprises 213 residues: Neuromodulin (213 aa).

Residues 1-213 are disordered; it reads MLCCIRRTKP…AEEAGKDQNV (213 aa). 2 S-palmitoyl cysteine lipidation sites follow: cysteine 3 and cysteine 4. Residues 9-33 show a composition bias toward basic and acidic residues; sequence KPVEKNEEADQEIKQDGTKPEENAH. The IQ domain maps to 32-61; the sequence is AHKAATKIQASFRGHITRKKMKDEDKDGEN. Over residues 57–73 the composition is skewed to acidic residues; the sequence is KDGENDTAPDESAETEE. Residues 74–86 are compositionally biased toward basic and acidic residues; that stretch reads KEERVSPSEEKPV. Low complexity predominate over residues 102-122; sequence PNSPAAEAPPTAATDSAPSDT. The segment covering 157 to 169 has biased composition (acidic residues); the sequence is EKEEEEEEEEEEE. Residues 191–213 show a composition bias toward basic and acidic residues; it reads QTDKKEALDDSKPAEEAGKDQNV.

It belongs to the neuromodulin family. In terms of assembly, binds calmodulin with a greater affinity in the absence of Ca(2+) than in its presence. Post-translationally, palmitoylated. Palmitoylation is essential for plasma membrane association.

It is found in the cell membrane. It localises to the cell projection. Its subcellular location is the growth cone membrane. The protein localises to the synapse. The protein resides in the filopodium membrane. This protein is associated with nerve growth. It is a major component of the motile 'growth cones' that form the tips of elongating axons. Plays a role in axonal and dendritic filopodia induction. This chain is Neuromodulin (gap43), found in Carassius auratus (Goldfish).